The primary structure comprises 186 residues: MVVVGLGNPGPRYAFTRHNVGFLFLDFLKNKDWKTEKYFAWNKINLAGNEVALVKPLTYMNLSGLAMPHVLKFFSASLDDIIVVYDDVSLKLGKIRIRKKGSDGGHNGMKSIIQALGTQEIKRIRVGIGDKPEGMDLVDFVLGEFSDEEWIILNKVFEVMKEALEVILVEGIEKAMSIYNSLEVRV.

Tyrosine 13 is a binding site for tRNA. Histidine 18 (proton acceptor) is an active-site residue. TRNA-binding residues include tyrosine 59, asparagine 61, and asparagine 107.

The protein belongs to the PTH family. In terms of assembly, monomer.

Its subcellular location is the cytoplasm. The enzyme catalyses an N-acyl-L-alpha-aminoacyl-tRNA + H2O = an N-acyl-L-amino acid + a tRNA + H(+). Its function is as follows. Hydrolyzes ribosome-free peptidyl-tRNAs (with 1 or more amino acids incorporated), which drop off the ribosome during protein synthesis, or as a result of ribosome stalling. Catalyzes the release of premature peptidyl moieties from peptidyl-tRNA molecules trapped in stalled 50S ribosomal subunits, and thus maintains levels of free tRNAs and 50S ribosomes. This Thermotoga sp. (strain RQ2) protein is Peptidyl-tRNA hydrolase.